We begin with the raw amino-acid sequence, 672 residues long: Glycine--tRNA ligase beta subunit (672 aa).

The protein belongs to the class-II aminoacyl-tRNA synthetase family. In terms of assembly, tetramer of two alpha and two beta subunits.

It is found in the cytoplasm. It catalyses the reaction tRNA(Gly) + glycine + ATP = glycyl-tRNA(Gly) + AMP + diphosphate. The protein is Glycine--tRNA ligase beta subunit (glyS) of Thermotoga maritima (strain ATCC 43589 / DSM 3109 / JCM 10099 / NBRC 100826 / MSB8).